A 903-amino-acid chain; its full sequence is Valine--tRNA ligase (903 aa).

Over residues 1-15 (MVCVTDQNNETTSQN) the composition is skewed to polar residues. Residues 1–21 (MVCVTDQNNETTSQNRADKLP) form a disordered region. The 'HIGH' region motif lies at 61-71 (PNVTGQLHMGH). The short motif at 552-556 (KMSKS) is the 'KMSKS' region element. Residue lysine 555 participates in ATP binding. Residues 836–903 (TVDVAAERKR…RINKRLEELA (68 aa)) adopt a coiled-coil conformation.

This sequence belongs to the class-I aminoacyl-tRNA synthetase family. ValS type 1 subfamily. Monomer.

It is found in the cytoplasm. The enzyme catalyses tRNA(Val) + L-valine + ATP = L-valyl-tRNA(Val) + AMP + diphosphate. In terms of biological role, catalyzes the attachment of valine to tRNA(Val). As ValRS can inadvertently accommodate and process structurally similar amino acids such as threonine, to avoid such errors, it has a 'posttransfer' editing activity that hydrolyzes mischarged Thr-tRNA(Val) in a tRNA-dependent manner. The sequence is that of Valine--tRNA ligase from Corynebacterium glutamicum (strain ATCC 13032 / DSM 20300 / JCM 1318 / BCRC 11384 / CCUG 27702 / LMG 3730 / NBRC 12168 / NCIMB 10025 / NRRL B-2784 / 534).